We begin with the raw amino-acid sequence, 408 residues long: Succinylornithine transaminase (408 aa).

Lysine 252 carries the post-translational modification N6-(pyridoxal phosphate)lysine.

Belongs to the class-III pyridoxal-phosphate-dependent aminotransferase family. AstC subfamily. Pyridoxal 5'-phosphate is required as a cofactor.

The catalysed reaction is N(2)-succinyl-L-ornithine + 2-oxoglutarate = N-succinyl-L-glutamate 5-semialdehyde + L-glutamate. It functions in the pathway amino-acid degradation; L-arginine degradation via AST pathway; L-glutamate and succinate from L-arginine: step 3/5. In terms of biological role, catalyzes the transamination of N(2)-succinylornithine and alpha-ketoglutarate into N(2)-succinylglutamate semialdehyde and glutamate. Can also act as an acetylornithine aminotransferase. In Salmonella paratyphi B (strain ATCC BAA-1250 / SPB7), this protein is Succinylornithine transaminase.